Consider the following 89-residue polypeptide: Large ribosomal subunit protein eL43 (89 aa).

The interval 1–28 (MVKKSKVGSTGRFGARYGRKAKRTVKDI) is disordered. A C4-type zinc finger spans residues 38 to 59 (CPKCDRPGVKRTHAGIWKCRKC).

It belongs to the eukaryotic ribosomal protein eL43 family. The cofactor is Zn(2+).

This Methanosphaera stadtmanae (strain ATCC 43021 / DSM 3091 / JCM 11832 / MCB-3) protein is Large ribosomal subunit protein eL43.